The chain runs to 156 residues: V-type proton ATPase 16 kDa proteolipid subunit c (156 aa).

Residues 1 to 7 (MAENPIY) lie on the Lumenal side of the membrane. The helical transmembrane segment at 8–30 (GPFFGVMGAASAIIFSALGAAYG) threads the bilayer. At 31-52 (TAKSGTGIAAMSVMRPELIMKS) the chain is on the cytoplasmic side. Residues 53 to 73 (IIPVVMAGIIAIYGLVVAVLI) traverse the membrane as a helical segment. The Lumenal segment spans residues 74-92 (AGSLDAPSNNYTLYKGFIH). A helical transmembrane segment spans residues 93–114 (LGAGLAVGFSGLAAGFAIGIVG). The Cytoplasmic portion of the chain corresponds to 115–126 (DAGVRGTAQQPR). The chain crosses the membrane as a helical span at residues 127–152 (LFVGMILILIFAEVLGLYGLIVAIYL). The Lumenal segment spans residues 153 to 156 (YTKQ).

The protein belongs to the V-ATPase proteolipid subunit family. As to quaternary structure, V-ATPase is a heteromultimeric enzyme made up of two complexes: the ATP-hydrolytic V1 complex and the proton translocation V0 complex. The V1 complex consists of three catalytic AB heterodimers that form a heterohexamer, three peripheral stalks each consisting of EG heterodimers, one central rotor including subunits D and F, and the regulatory subunits C and H. The proton translocation complex V0 consists of the proton transport subunit a, a ring of proteolipid subunits c9c'', rotary subunit d, subunits e and f, and the accessory subunits VhaAC45 and ATP6AP2.

The protein localises to the membrane. Its function is as follows. Proton-conducting pore forming subunit of the V0 complex of vacuolar(H+)-ATPase (V-ATPase), a multisubunit enzyme composed of a peripheral complex (V1) that hydrolyzes ATP and a membrane integral complex (V0) that translocates protons. V-ATPase is responsible for acidifying and maintaining the pH of intracellular compartments and in some cell types, is targeted to the plasma membrane, where it is responsible for acidifying the extracellular environment. The protein is V-type proton ATPase 16 kDa proteolipid subunit c (VHA16) of Heliothis virescens (Tobacco budworm moth).